Reading from the N-terminus, the 812-residue chain is INO80 complex subunit D (812 aa).

Disordered stretches follow at residues 521-573 (NSRK…LCMP) and 581-600 (EVSS…ELPD). A compositionally biased stretch (basic residues) spans 524–558 (KVQHHQQRKPRKKTKPPALTKKTKKKRRRGPRRPQ). Positions 585–595 (IRSPSTPNLST) are enriched in polar residues.

This sequence belongs to the INO80D family. In terms of assembly, component of the chromatin-remodeling INO80 complex.

The protein resides in the nucleus. In terms of biological role, putative regulatory component of the chromatin remodeling INO80 complex which is involved in transcriptional regulation, DNA replication and probably DNA repair. The sequence is that of INO80 complex subunit D from Xenopus laevis (African clawed frog).